A 155-amino-acid chain; its full sequence is Peptide methionine sulfoxide reductase MsrB (155 aa).

The MsrB domain maps to 15 to 137; sequence REALIATLNA…NSVSLTFIPT (123 aa). Positions 54, 57, 103, and 106 each coordinate Zn(2+). The active-site Nucleophile is the C126.

This sequence belongs to the MsrB Met sulfoxide reductase family. The cofactor is Zn(2+).

The catalysed reaction is L-methionyl-[protein] + [thioredoxin]-disulfide + H2O = L-methionyl-(R)-S-oxide-[protein] + [thioredoxin]-dithiol. In Xylella fastidiosa (strain M23), this protein is Peptide methionine sulfoxide reductase MsrB.